Reading from the N-terminus, the 323-residue chain is o-succinylbenzoate synthase (323 aa).

Lysine 134 (proton donor) is an active-site residue. Residues aspartate 162, glutamate 191, and aspartate 214 each contribute to the Mg(2+) site. Lysine 236 acts as the Proton acceptor in catalysis.

Belongs to the mandelate racemase/muconate lactonizing enzyme family. MenC type 1 subfamily. A divalent metal cation is required as a cofactor.

The catalysed reaction is (1R,6R)-6-hydroxy-2-succinyl-cyclohexa-2,4-diene-1-carboxylate = 2-succinylbenzoate + H2O. It functions in the pathway quinol/quinone metabolism; 1,4-dihydroxy-2-naphthoate biosynthesis; 1,4-dihydroxy-2-naphthoate from chorismate: step 4/7. The protein operates within quinol/quinone metabolism; menaquinone biosynthesis. Its function is as follows. Converts 2-succinyl-6-hydroxy-2,4-cyclohexadiene-1-carboxylate (SHCHC) to 2-succinylbenzoate (OSB). In Yersinia pestis bv. Antiqua (strain Antiqua), this protein is o-succinylbenzoate synthase.